The sequence spans 541 residues: Glutamyl-tRNA(Gln) amidotransferase subunit B, mitochondrial (541 aa).

It belongs to the GatB/GatE family. GatB subfamily. Subunit of the heterotrimeric GatFAB amidotransferase (AdT) complex, composed of A (HER2), B (PET112) and F (YGR102C) subunits.

The protein localises to the mitochondrion. It catalyses the reaction L-glutamyl-tRNA(Gln) + L-glutamine + ATP + H2O = L-glutaminyl-tRNA(Gln) + L-glutamate + ADP + phosphate + H(+). Its function is as follows. Allows the formation of correctly charged Gln-tRNA(Gln) through the transamidation of misacylated Glu-tRNA(Gln) in the mitochondria. The reaction takes place in the presence of glutamine and ATP through an activated gamma-phospho-Glu-tRNA(Gln). This is Glutamyl-tRNA(Gln) amidotransferase subunit B, mitochondrial from Saccharomyces cerevisiae (strain ATCC 204508 / S288c) (Baker's yeast).